The following is a 98-amino-acid chain: Homeobox protein Ht-En (98 aa).

Residues Glu-3 to Ser-62 constitute a DNA-binding region (homeobox). Positions Asn-79–Ala-98 are disordered. Positions Ser-81–Ala-98 are enriched in low complexity.

The protein belongs to the engrailed homeobox family. In terms of processing, phosphorylated in the Ser-rich domain.

The protein resides in the nucleus. In terms of biological role, this protein specifies the body segmentation pattern. The polypeptide is Homeobox protein Ht-En (HT-EN) (Helobdella triserialis (Leech)).